The following is a 237-amino-acid chain: 2,3-bisphosphoglycerate-dependent phosphoglycerate mutase (237 aa).

Substrate-binding positions include 8–15, 21–22, R60, 87–90, K98, 114–115, and 180–181; these read RHGQSAWN, TG, ERHY, RR, and GN. The Tele-phosphohistidine intermediate role is filled by H9. Catalysis depends on E87, which acts as the Proton donor/acceptor.

The protein belongs to the phosphoglycerate mutase family. BPG-dependent PGAM subfamily. As to quaternary structure, homodimer.

It catalyses the reaction (2R)-2-phosphoglycerate = (2R)-3-phosphoglycerate. The protein operates within carbohydrate degradation; glycolysis; pyruvate from D-glyceraldehyde 3-phosphate: step 3/5. In terms of biological role, catalyzes the interconversion of 2-phosphoglycerate and 3-phosphoglycerate. The sequence is that of 2,3-bisphosphoglycerate-dependent phosphoglycerate mutase from Hyphomonas neptunium (strain ATCC 15444).